We begin with the raw amino-acid sequence, 158 residues long: Sorbin and SH3 domain-containing protein 2 (158 aa).

Residues 1-46 form the SoHo domain; that stretch reads MRAATPLQTVDRPKDWYKTMFKQIHMVHKPDDDTDMYNTPYTYNAG. A disordered region spans residues 28 to 158; the sequence is HKPDDDTDMY…TKPQAGRRKV (131 aa). The segment covering 50 to 66 has biased composition (polar residues); sequence SPYSAQSHPAAKTQTYR. The span at 71–81 shows a compositional bias: basic and acidic residues; that stretch reads SHSDNGTDAFK. Position 73 is a phosphoserine (S73). Positions 86–99 are enriched in pro residues; sequence PVPPPHVPPPVPPL. A compositionally biased stretch (basic and acidic residues) spans 100-136; sequence RPRDRSSTEKHDWDPPDRKVDTRKFRSEPRSIFEYEP. A153 is subject to Alanine amide.

In terms of assembly, interacts with ABL1/c-Abl, ABL2/v-Abl/Arg, ACTN, AKT1, CBL, PALLD and PAK1. Interacts with ABL, CBL, DNM1, DNM2, FLOT1, AFDN, PTK2B/PYK2, SAPAP, SPTAN1, SYNJ1, SYNJ2, VCL/vinculin, and WASF. Interacts with PTPN12 and WASF1 via its SH3 domains; this interaction may mediate the partial PTPN12 and WASF1 translocation to focal adhesion sites. Post-translationally, ubiquitinated by CBL. In terms of processing, dephosphorylated by PTPN12. As to expression, expressed in duodenum.

It is found in the cytoplasm. The protein resides in the perinuclear region. It localises to the apical cell membrane. Its subcellular location is the cell junction. The protein localises to the focal adhesion. It is found in the cell projection. The protein resides in the lamellipodium. Adapter protein that plays a role in the assembling of signaling complexes, being a link between ABL kinases and actin cytoskeleton. Can form complex with ABL1 and CBL, thus promoting ubiquitination and degradation of ABL1 or with AKT1 and PAK1, thus mediating AKT1-mediated activation of PAK1. May play a role in the regulation of pancreatic cell adhesion, possibly by acting on WASF1 phosphorylation, enhancing phosphorylation by ABL1, as well as dephosphorylation by PTPN12. Increases water and sodium absorption in the intestine and gall-bladder. This chain is Sorbin and SH3 domain-containing protein 2 (SORBS2), found in Sus scrofa (Pig).